Here is a 370-residue protein sequence, read N- to C-terminus: Pyruvate dehydrogenase E1 component subunit alpha (370 aa).

In terms of assembly, heterodimer of an alpha and a beta chain. It depends on thiamine diphosphate as a cofactor.

The enzyme catalyses N(6)-[(R)-lipoyl]-L-lysyl-[protein] + pyruvate + H(+) = N(6)-[(R)-S(8)-acetyldihydrolipoyl]-L-lysyl-[protein] + CO2. The pyruvate dehydrogenase complex catalyzes the overall conversion of pyruvate to acetyl-CoA and CO(2). It contains multiple copies of three enzymatic components: pyruvate dehydrogenase (E1), dihydrolipoamide acetyltransferase (E2) and lipoamide dehydrogenase (E3). The polypeptide is Pyruvate dehydrogenase E1 component subunit alpha (pdhA) (Staphylococcus aureus (strain COL)).